Consider the following 283-residue polypeptide: Probable endonuclease 4 (283 aa).

The Zn(2+) site is built by His67, His107, Glu144, Asp178, His181, His215, Asp228, His230, and Glu260.

The protein belongs to the AP endonuclease 2 family. Zn(2+) serves as cofactor.

The enzyme catalyses Endonucleolytic cleavage to 5'-phosphooligonucleotide end-products.. In terms of biological role, endonuclease IV plays a role in DNA repair. It cleaves phosphodiester bonds at apurinic or apyrimidinic (AP) sites, generating a 3'-hydroxyl group and a 5'-terminal sugar phosphate. The sequence is that of Probable endonuclease 4 from Geobacter sp. (strain M21).